Here is a 347-residue protein sequence, read N- to C-terminus: Phosphoribosylformylglycinamidine cyclo-ligase (347 aa).

This sequence belongs to the AIR synthase family.

The protein resides in the cytoplasm. The enzyme catalyses 2-formamido-N(1)-(5-O-phospho-beta-D-ribosyl)acetamidine + ATP = 5-amino-1-(5-phospho-beta-D-ribosyl)imidazole + ADP + phosphate + H(+). It participates in purine metabolism; IMP biosynthesis via de novo pathway; 5-amino-1-(5-phospho-D-ribosyl)imidazole from N(2)-formyl-N(1)-(5-phospho-D-ribosyl)glycinamide: step 2/2. This Prochlorococcus marinus subsp. pastoris (strain CCMP1986 / NIES-2087 / MED4) protein is Phosphoribosylformylglycinamidine cyclo-ligase.